A 325-amino-acid polypeptide reads, in one-letter code: Delta(1)-pyrroline-2-carboxylate reductase (325 aa).

The protein belongs to the ornithine cyclodeaminase/mu-crystallin family.

The enzyme catalyses L-proline + NAD(+) = 1-pyrroline-2-carboxylate + NADH + H(+). The catalysed reaction is L-proline + NADP(+) = 1-pyrroline-2-carboxylate + NADPH + H(+). Catalyzes the reduction of Delta(1)-pyrroline-2-carboxylate (Pyr2C) to L-proline, using preferentially NADPH over NADH as the electron donor. Is likely involved in a degradation pathway that converts trans-3-hydroxy-L-proline (t3LHyp) to L-proline. The protein is Delta(1)-pyrroline-2-carboxylate reductase of Bacillus cereus (strain ATCC 10987 / NRS 248).